The primary structure comprises 422 residues: Inhibitor of growth protein 1 (422 aa).

The segment at 261–349 is disordered; the sequence is ELGDTAGNSG…EASPADLPID (89 aa). Residue Lys278 forms a Glycyl lysine isopeptide (Lys-Gly) (interchain with G-Cter in SUMO2) linkage. The segment covering 297–314 has biased composition (basic and acidic residues); the sequence is RNNENRENASSNHDHDDG. Basic residues predominate over residues 322–334; the sequence is KKAKTSKKKKRSK. The PHD-type zinc finger occupies 353-402; it reads PTYCLCNQVSYGEMIGCDNDECPIEWFHFSCVGLNHKPKGKWYCPKCRGE. Zn(2+)-binding residues include Cys356, Cys358, Cys369, Cys374, His380, Cys383, Cys396, and Cys399. A PBR region spans residues 405 to 422; that stretch reads KTMDKALEKSKKERAYNR.

Belongs to the ING family. Interacts with H3K4me3 and to a lesser extent with H3K4me2. Interacts with TP53. Isoform 2 interacts with RSL1D1. Isoform 2 was expressed in all normal tissues and cells examined, as well as in all breast cancer and melanoma cell lines examined. Isoform 3 was expressed in testis, liver, and kidney, weakly expressed in colon and brain and not expressed in breast and cultured melanocytes. Isoform 4 was highly expressed in testis and weakly expressed in brain, but not expressed in breast, colon, kidney, melanocytes, breast cancer or melanoma cell lines.

It is found in the nucleus. Cooperates with p53/TP53 in the negative regulatory pathway of cell growth by modulating p53-dependent transcriptional activation. Implicated as a tumor suppressor gene. The chain is Inhibitor of growth protein 1 (ING1) from Homo sapiens (Human).